The sequence spans 435 residues: Cytochrome c biogenesis protein Ccs1 (435 aa).

3 helical membrane passes run 17-37, 77-97, and 163-183; these read LSLS…GTII, NPCF…CTFS, and IAPI…LISL.

The protein belongs to the Ccs1/CcsB family. In terms of assembly, may interact with CcsA.

The protein localises to the plastid. It localises to the chloroplast thylakoid membrane. Its function is as follows. Required during biogenesis of c-type cytochromes (cytochrome c6 and cytochrome f) at the step of heme attachment. The chain is Cytochrome c biogenesis protein Ccs1 from Gracilaria tenuistipitata var. liui (Red alga).